The primary structure comprises 265 residues: Insulin-like growth factor-binding protein 5 (265 aa).

The N-terminal stretch at 1-21 (MEMLLPMCLLLVSLCLGQCQA) is a signal peptide. The IGFBP N-terminal domain occupies 24 to 104 (SFVHCEPCDD…LHGRGVCLNL (81 aa)). 6 disulfides stabilise this stretch: C28–C54, C31–C56, C39–C57, C46–C60, C68–C81, and C75–C101. Positions 111-121 (SKIDRESREED) are enriched in basic and acidic residues. Positions 111–137 (SKIDRESREEDPTTSETEDIYQSKHRG) are disordered. A Thyroglobulin type-1 domain is found at 182 to 256 (MGPCRRQVET…IDYVNGDLQC (75 aa)). 3 disulfide bridges follow: C185–C212, C223–C234, and C236–C256.

The protein localises to the secreted. In terms of biological role, IGF-binding proteins prolong the half-life of the IGFs and have been shown to either inhibit or stimulate the growth promoting effects of the IGFs on cell culture. They alter the interaction of IGFs with their cell surface receptors. Promotes anterior neural development by stimulating insulin growth factor (IGF) signaling via IGF receptors. In Xenopus laevis (African clawed frog), this protein is Insulin-like growth factor-binding protein 5.